A 228-amino-acid chain; its full sequence is Protein-L-isoaspartate O-methyltransferase (228 aa).

The interval Met-1 to Glu-20 is disordered. Residue Ser-76 is part of the active site.

The protein belongs to the methyltransferase superfamily. L-isoaspartyl/D-aspartyl protein methyltransferase family.

The protein localises to the cytoplasm. The enzyme catalyses [protein]-L-isoaspartate + S-adenosyl-L-methionine = [protein]-L-isoaspartate alpha-methyl ester + S-adenosyl-L-homocysteine. Functionally, catalyzes the methyl esterification of L-isoaspartyl residues in peptides and proteins that result from spontaneous decomposition of normal L-aspartyl and L-asparaginyl residues. It plays a role in the repair and/or degradation of damaged proteins. The protein is Protein-L-isoaspartate O-methyltransferase of Magnetococcus marinus (strain ATCC BAA-1437 / JCM 17883 / MC-1).